The primary structure comprises 357 residues: Phospho-N-acetylmuramoyl-pentapeptide-transferase (357 aa).

The next 10 helical transmembrane spans lie at 4-24 (QILFSGVIGLFLTLVGTPLLI), 52-72 (TMGGIAFILATIIAYFMSKVI), 77-97 (PTFSGLLVLGLMAGMGLVGFL), 115-135 (AKMAGQLIVGIAFAVLALQFA), 153-173 (FGWTIGPVLFVIWALFMILAM), 186-206 (LATGAATMVFGAYTFIGVWQF), 228-248 (PLDLAVVASALMGACFGFLWW), 255-275 (IFMGDTGSLALGGALAGLAIC), 280-300 (LLVALLGGLFVLITMSVVIQV), and 334-354 (FWIIQGMCVIVGLGLFYAGWA).

The protein belongs to the glycosyltransferase 4 family. MraY subfamily. Requires Mg(2+) as cofactor.

The protein localises to the cell membrane. The catalysed reaction is UDP-N-acetyl-alpha-D-muramoyl-L-alanyl-gamma-D-glutamyl-meso-2,6-diaminopimeloyl-D-alanyl-D-alanine + di-trans,octa-cis-undecaprenyl phosphate = di-trans,octa-cis-undecaprenyl diphospho-N-acetyl-alpha-D-muramoyl-L-alanyl-D-glutamyl-meso-2,6-diaminopimeloyl-D-alanyl-D-alanine + UMP. It participates in cell wall biogenesis; peptidoglycan biosynthesis. Functionally, catalyzes the initial step of the lipid cycle reactions in the biosynthesis of the cell wall peptidoglycan: transfers peptidoglycan precursor phospho-MurNAc-pentapeptide from UDP-MurNAc-pentapeptide onto the lipid carrier undecaprenyl phosphate, yielding undecaprenyl-pyrophosphoryl-MurNAc-pentapeptide, known as lipid I. The sequence is that of Phospho-N-acetylmuramoyl-pentapeptide-transferase from Streptomyces avermitilis (strain ATCC 31267 / DSM 46492 / JCM 5070 / NBRC 14893 / NCIMB 12804 / NRRL 8165 / MA-4680).